The primary structure comprises 444 residues: Tubulin beta chain (444 aa).

Residues glutamine 11, glutamate 69, serine 138, glycine 142, threonine 143, glycine 144, asparagine 204, and asparagine 226 each contribute to the GTP site. Glutamate 69 serves as a coordination point for Mg(2+).

It belongs to the tubulin family. Dimer of alpha and beta chains. A typical microtubule is a hollow water-filled tube with an outer diameter of 25 nm and an inner diameter of 15 nM. Alpha-beta heterodimers associate head-to-tail to form protofilaments running lengthwise along the microtubule wall with the beta-tubulin subunit facing the microtubule plus end conferring a structural polarity. Microtubules usually have 13 protofilaments but different protofilament numbers can be found in some organisms and specialized cells. The cofactor is Mg(2+).

It is found in the cytoplasm. The protein localises to the cytoskeleton. Functionally, tubulin is the major constituent of microtubules, a cylinder consisting of laterally associated linear protofilaments composed of alpha- and beta-tubulin heterodimers. Microtubules grow by the addition of GTP-tubulin dimers to the microtubule end, where a stabilizing cap forms. Below the cap, tubulin dimers are in GDP-bound state, owing to GTPase activity of alpha-tubulin. The sequence is that of Tubulin beta chain from Trichuris trichiura (Whipworm).